An 81-amino-acid polypeptide reads, in one-letter code: Cytochrome b559 subunit alpha (81 aa).

Residues isoleucine 21 to tryptophan 35 traverse the membrane as a helical segment. Histidine 23 is a heme binding site.

It belongs to the PsbE/PsbF family. In terms of assembly, heterodimer of an alpha subunit and a beta subunit. PSII is composed of 1 copy each of membrane proteins PsbA, PsbB, PsbC, PsbD, PsbE, PsbF, PsbH, PsbI, PsbJ, PsbK, PsbL, PsbM, PsbT, PsbX, PsbY, PsbZ, Psb30/Ycf12, peripheral proteins PsbO, CyanoQ (PsbQ), PsbU, PsbV and a large number of cofactors. It forms dimeric complexes. Requires heme b as cofactor.

The protein resides in the cellular thylakoid membrane. This b-type cytochrome is tightly associated with the reaction center of photosystem II (PSII). PSII is a light-driven water:plastoquinone oxidoreductase that uses light energy to abstract electrons from H(2)O, generating O(2) and a proton gradient subsequently used for ATP formation. It consists of a core antenna complex that captures photons, and an electron transfer chain that converts photonic excitation into a charge separation. The sequence is that of Cytochrome b559 subunit alpha from Microcystis aeruginosa (strain NIES-843 / IAM M-2473).